The following is a 109-amino-acid chain: Spermidine export protein MdtI (109 aa).

4 helical membrane passes run 6–26 (WVHG…NVLL), 36–56 (CYGI…SQAV), 64–84 (AYAL…WVLF), and 88–108 (LNPK…MIKL).

It belongs to the drug/metabolite transporter (DMT) superfamily. Small multidrug resistance (SMR) (TC 2.A.7.1) family. MdtI subfamily. In terms of assembly, forms a complex with MdtJ.

Its subcellular location is the cell inner membrane. Its function is as follows. Catalyzes the excretion of spermidine. The chain is Spermidine export protein MdtI from Salmonella arizonae (strain ATCC BAA-731 / CDC346-86 / RSK2980).